Here is a 266-residue protein sequence, read N- to C-terminus: Undecaprenyl-diphosphatase (266 aa).

A run of 7 helical transmembrane segments spans residues 41 to 61 (YAYS…LIYF), 82 to 102 (LVYI…LYYV), 106 to 126 (WLVV…AVVL), 159 to 179 (AVSV…LLLL), 191 to 211 (FVLV…SEGG), 213 to 233 (VATA…IITI), and 246 to 266 (VLVN…RIIF).

The protein belongs to the UppP family.

It localises to the cell membrane. The enzyme catalyses di-trans,octa-cis-undecaprenyl diphosphate + H2O = di-trans,octa-cis-undecaprenyl phosphate + phosphate + H(+). In terms of biological role, catalyzes the dephosphorylation of undecaprenyl diphosphate (UPP). This Pyrobaculum aerophilum (strain ATCC 51768 / DSM 7523 / JCM 9630 / CIP 104966 / NBRC 100827 / IM2) protein is Undecaprenyl-diphosphatase.